The following is a 396-amino-acid chain: Elongation factor Tu 1 (396 aa).

The 197-residue stretch at 10-206 folds into the tr-type G domain; sequence KPHVNVGTIG…ALDTYIPTPE (197 aa). Positions 19–26 are G1; that stretch reads GHVDHGKT. 19 to 26 contacts GTP; the sequence is GHVDHGKT. Thr-26 provides a ligand contact to Mg(2+). Positions 60–64 are G2; the sequence is GITIN. Residues 81–84 are G3; that stretch reads DCPG. Residues 81-85 and 136-139 each bind GTP; these read DCPGH and NKAD. The interval 136 to 139 is G4; it reads NKAD. The interval 174-176 is G5; that stretch reads SAK.

This sequence belongs to the TRAFAC class translation factor GTPase superfamily. Classic translation factor GTPase family. EF-Tu/EF-1A subfamily. In terms of assembly, monomer.

It is found in the cytoplasm. The catalysed reaction is GTP + H2O = GDP + phosphate + H(+). In terms of biological role, GTP hydrolase that promotes the GTP-dependent binding of aminoacyl-tRNA to the A-site of ribosomes during protein biosynthesis. The sequence is that of Elongation factor Tu 1 from Methylobacillus flagellatus (strain ATCC 51484 / DSM 6875 / VKM B-1610 / KT).